Reading from the N-terminus, the 298-residue chain is Protoheme IX farnesyltransferase (298 aa).

8 helical membrane-spanning segments follow: residues 24-44 (VVSL…PAWP), 46-66 (WTTI…AAAF), 97-117 (LVFA…VVNP), 118-138 (LTMW…TVLL), 146-166 (IVIG…AATG), 172-192 (ALLL…ALAL), 231-251 (LLPV…VLLG), and 278-298 (IWYL…PIPV).

Belongs to the UbiA prenyltransferase family. Protoheme IX farnesyltransferase subfamily.

It is found in the cell inner membrane. The enzyme catalyses heme b + (2E,6E)-farnesyl diphosphate + H2O = Fe(II)-heme o + diphosphate. The protein operates within porphyrin-containing compound metabolism; heme O biosynthesis; heme O from protoheme: step 1/1. Functionally, converts heme B (protoheme IX) to heme O by substitution of the vinyl group on carbon 2 of heme B porphyrin ring with a hydroxyethyl farnesyl side group. The sequence is that of Protoheme IX farnesyltransferase from Thiobacillus denitrificans (strain ATCC 25259 / T1).